The chain runs to 157 residues: SsrA-binding protein (157 aa).

It belongs to the SmpB family.

Its subcellular location is the cytoplasm. In terms of biological role, required for rescue of stalled ribosomes mediated by trans-translation. Binds to transfer-messenger RNA (tmRNA), required for stable association of tmRNA with ribosomes. tmRNA and SmpB together mimic tRNA shape, replacing the anticodon stem-loop with SmpB. tmRNA is encoded by the ssrA gene; the 2 termini fold to resemble tRNA(Ala) and it encodes a 'tag peptide', a short internal open reading frame. During trans-translation Ala-aminoacylated tmRNA acts like a tRNA, entering the A-site of stalled ribosomes, displacing the stalled mRNA. The ribosome then switches to translate the ORF on the tmRNA; the nascent peptide is terminated with the 'tag peptide' encoded by the tmRNA and targeted for degradation. The ribosome is freed to recommence translation, which seems to be the essential function of trans-translation. The chain is SsrA-binding protein from Chlorobaculum tepidum (strain ATCC 49652 / DSM 12025 / NBRC 103806 / TLS) (Chlorobium tepidum).